Reading from the N-terminus, the 304-residue chain is HTH-type transcriptional regulator BenM (304 aa).

The HTH lysR-type domain maps to 1-58 (MELRHLRYFVAVVEEQSFTKAADKLCIAQPPLSRQIQNLEEELGIQLLERGSRPVKTT). Residues 18 to 37 (FTKAADKLCIAQPPLSRQIQ) constitute a DNA-binding region (H-T-H motif). Benzoate contacts are provided by Ser-99 and Leu-104. Ser-99 contacts cis,cis-muconate. Residue Thr-128 coordinates cis,cis-muconate. Residues Phe-144, Arg-160, and Asn-202 each coordinate benzoate. Cis,cis-muconate is bound at residue Phe-203. Tyr-293 serves as a coordination point for benzoate.

It belongs to the LysR transcriptional regulatory family. As to quaternary structure, homotetramer; dimer of dimers. The dimers can also associate to form linear, higher oligomers (in vitro).

In terms of biological role, positive regulator of the ben and cat genes for benzoate degradation. BenM is necessary for ben gene expression but not for expression of the cat genes, which can be regulated by CatM. Binds to the inducers cis,cis-muconate and benzoate. The sequence is that of HTH-type transcriptional regulator BenM (benM) from Acinetobacter baylyi (strain ATCC 33305 / BD413 / ADP1).